The sequence spans 214 residues: Large ribosomal subunit protein uL16-like (214 aa).

This sequence belongs to the universal ribosomal protein uL16 family. As to quaternary structure, component of a male germ cell-specific 60S large ribosomal subunit (LSU), which contains RPL10L and RPL39L, instead of RPL10 and RPL39 paralogs. The composition of the rest of the complex is similar to classical ribosomes. Testis-specific.

It is found in the cytoplasm. Functionally, testis-specific component of the ribosome, which is required for the transition from prophase to metaphase in male meiosis I. Compensates for the inactivated X-linked RPL10 paralog during spermatogenesis. The ribosome is a large ribonucleoprotein complex responsible for the synthesis of proteins in the cell. The male germ cell-specific ribosome displays a ribosomal polypeptide exit tunnel of distinct size and charge states compared with the classical ribosome. It is responsible for regulating the biosynthesis and folding of a subset of male germ-cell-specific proteins that are essential for the formation of sperm. The polypeptide is Large ribosomal subunit protein uL16-like (Mus musculus (Mouse)).